The sequence spans 127 residues: RxLR effector protein CRE6 (127 aa).

The N-terminal stretch at 1 to 19 (MIRNALLVLVFVLIGTISA) is a signal peptide. The short motif at 48–67 (RLLRQGSVKEGGVHDATEER) is the RxLR-dEER element.

It belongs to the RxLR effector family.

The protein localises to the secreted. The protein resides in the host cell. Functionally, effector that is involved in host plant infection. Contributes to virulence during the early infection stage, by inhibiting plant defense responses induced by both PAMP-triggered immunity (PTI) and effector-triggered immunity (ETI). This chain is RxLR effector protein CRE6, found in Phytophthora infestans (strain T30-4) (Potato late blight agent).